A 1079-amino-acid chain; its full sequence is MAFSSCCWILLALTWCTSAYGPDQRAQKKGDIILGGLFPIHFGVAAKDQNLESRPESVECIRYNFRGFRWLQAMIFAIEEINSSPALLPNMTLGYRIFDTCNTVSKALEATLSFVAQNKIDSLNLDEFCNCSEHIPSTIAVVGATGSGISTAVANLLGLFYIPQVSYASSSRLLSNKNQFKSFLRTIPNDEHQATAMADIIEYFRWNWVGTIAADDDYGRPGIEKFREEAEERDICIDFSELISQYSDEEEIQQVVEVIQNSTAKVIVVFSSGPDLEPLIKEIVRRNITGKIWLASEAWASSSLIAMPEYFHVVGGTIGFALKAGQIPGFREFLQKVHPSKSVHNGFAKEFWEETFNCHLQEGAKGPLTTDTFLRGHEEGGGRISNSSTAFRPLCTGDENISSVETPYMDYTHLRISYNVYLAVYSIAHALQDIYTCIPGRGLFTNGSCADIKKVEAWQVLKHLRHLNFTSNMGEQVTFDEYGDLAGNYSIINWHLSPEDGSIVFKEVGYYNVYAKKGERLFINEEKILWSGFSREVPFSNCSRDCLAGTRKGIIEGEPTCCFECVECPDGEYSDETDASACDKCPDDFWSNENHTSCIAKEIEFLSWTEPFGIALTLFAVLGIFLTAFVLGVFIKFRNTPIVKATNRELSYLLLFSLLCCFSSSLFFIGEPQDWTCRLRQPAFGISFVLCISCILVKTNRVLLVFEAKIPTSFHRKWWGLNLQFLLVFLCTFMQIVICAIWLYTAPPSSYRNHELEDEIIFITCHEGSLMALGFLIGYTCLLAAICFFFAFKSRKLPENFNEAKFITFSMLIFFIVWISFIPAYASTYGKFVSAVEVIAILAASFGLLACIFFNKVYIILFKPSRNTIEEVRCSTAAHAFKVAARATLRRSNVSRQRSSSLGGSTGSTPSSSISSKSNSEDPFPQPERQKKQQPLALTQHVPQPQAPSTPQPQPQLQQQPRCKQKVIFGSGTVTFSLSFDEPQKSATAHRNSTHQNSLEAQKNNDALTRHQALLPLQCGEADAELTAQETGLQGSVGGDHHPEMEDPEEMSPALVMSNSRSFVISGGGSTVTENMLHS.

A signal peptide spans 1–19; that stretch reads MAFSSCCWILLALTWCTSA. Residues 20-610 lie on the Extracellular side of the membrane; that stretch reads YGPDQRAQKK…KEIEFLSWTE (591 aa). Residues 22-188 are ligand-binding 1 (LB1); it reads PDQRAQKKGD…QFKSFLRTIP (167 aa). Cysteine 60 and cysteine 101 form a disulfide bridge. 66–70 contributes to the phosphate binding site; sequence RGFRW. Residues isoleucine 81, serine 84, leucine 87, and leucine 88 each contribute to the Ca(2+) site. Asparagine 90 carries N-linked (GlcNAc...) asparagine glycosylation. Threonine 100 is a binding site for Ca(2+). An N-linked (GlcNAc...) asparagine glycan is attached at asparagine 130. Threonine 145 contacts Ca(2+). The L-tryptophan site is built by serine 147, alanine 168, and serine 170. Ca(2+)-binding residues include serine 170, proline 188, aspartate 190, glutamate 231, and aspartate 234. The interval 189 to 324 is ligand-binding 2 (LB2); the sequence is NDEHQATAMA…GGTIGFALKA (136 aa). 7 disulfide bridges follow: cysteine 236–cysteine 561, cysteine 358–cysteine 395, cysteine 437–cysteine 449, cysteine 542–cysteine 562, cysteine 546–cysteine 565, cysteine 568–cysteine 582, and cysteine 585–cysteine 598. Spermine contacts are provided by aspartate 238 and serine 240. N-linked (GlcNAc...) asparagine glycosylation is found at asparagine 261 and asparagine 287. A Ca(2+)-binding site is contributed by glutamate 297. Glutamate 297 is a binding site for L-tryptophan. 2 N-linked (GlcNAc...) asparagine glycosylation sites follow: asparagine 386 and asparagine 400. 415-417 contributes to the phosphate binding site; that stretch reads RIS. 3 N-linked (GlcNAc...) asparagine glycosylation sites follow: asparagine 446, asparagine 468, and asparagine 488. Tyrosine 489 contacts Ca(2+). N-linked (GlcNAc...) asparagine glycosylation occurs at asparagine 541. Residues 542-612 are cysteine-rich (CR); it reads CSRDCLAGTR…IEFLSWTEPF (71 aa). Glycine 557 serves as a coordination point for Ca(2+). N-linked (GlcNAc...) asparagine glycosylation is present at asparagine 594. The helical transmembrane segment at 611–636 threads the bilayer; the sequence is PFGIALTLFAVLGIFLTAFVLGVFIK. Residues 637-648 are Cytoplasmic-facing; that stretch reads FRNTPIVKATNR. The segment at 637–648 is intracellular loop 1 (ICL1); it reads FRNTPIVKATNR. The helical transmembrane segment at 649 to 668 threads the bilayer; it reads ELSYLLLFSLLCCFSSSLFF. The Extracellular segment spans residues 669-674; it reads IGEPQD. Residues 675–698 traverse the membrane as a helical segment; that stretch reads WTCRLRQPAFGISFVLCISCILVK. The Cytoplasmic segment spans residues 699–722; that stretch reads TNRVLLVFEAKIPTSFHRKWWGLN. Residues 699–722 form an intracellular loop 2 (ICL2) region; the sequence is TNRVLLVFEAKIPTSFHRKWWGLN. A helical transmembrane segment spans residues 723–745; the sequence is LQFLLVFLCTFMQIVICAIWLYT. At 746-769 the chain is on the extracellular side; that stretch reads APPSSYRNHELEDEIIFITCHEGS. The chain crosses the membrane as a helical span at residues 770 to 789; it reads LMALGFLIGYTCLLAAICFF. The Cytoplasmic portion of the chain corresponds to 790-805; it reads FAFKSRKLPENFNEAK. Residues 790-805 are intracellular loop 3 (ICL3); it reads FAFKSRKLPENFNEAK. The helical transmembrane segment at 806–828 threads the bilayer; the sequence is FITFSMLIFFIVWISFIPAYAST. The Extracellular portion of the chain corresponds to 829 to 832; it reads YGKF. The helical transmembrane segment at 833 to 854 threads the bilayer; the sequence is VSAVEVIAILAASFGLLACIFF. At 855–1079 the chain is on the cytoplasmic side; the sequence is NKVYIILFKP…STVTENMLHS (225 aa). Residues 855 to 1079 form a C-terminus region; that stretch reads NKVYIILFKP…STVTENMLHS (225 aa). The segment at 880-900 is interaction with RNF19A; it reads AFKVAARATLRRSNVSRQRSS. Residue threonine 888 is modified to Phosphothreonine. An arginine-rich retention motif region spans residues 890 to 898; that stretch reads RRSNVSRQR. 3 positions are modified to phosphoserine: serine 892, serine 899, and serine 920. The segment covering 892 to 918 has biased composition (low complexity); the sequence is SNVSRQRSSSLGGSTGSTPSSSISSKS. The interval 892–963 is disordered; it reads SNVSRQRSSS…QPQLQQQPRC (72 aa). Over residues 945-954 the composition is skewed to pro residues; sequence PQAPSTPQPQ. Residue serine 1062 is modified to Phosphoserine.

It belongs to the G-protein coupled receptor 3 family. In terms of assembly, homodimer; disulfide-linked. Interacts with VCP. Interacts with ARRB1. Phosphorylation at Thr-888 by PKC impairs coupling with G(q)/G(11) G-proteins, while it does not affect G(i)/G(o)-coupling. Phosphorylation at Ser-892 by PKC and Ser-899 by PKA promote plasma membrane localization. Post-translationally, ubiquitinated by RNF19A; which induces proteasomal degradation.

The protein localises to the cell membrane. In resting state, adopts an open conformation, anion-binding promoting the inactive configuration. Upon aromatic amino acid-binding, the groove in the extracellular venus flytrap module is closed, thereby inducing the formation of a novel homodimer interface between subunits. Calcium ions stabilize the active state by enhancing homodimer interactions between membrane-proximal domains to fully activate the receptor. Upon activation, the homodimer adopts an asymmetric configuration of the 7-transmembrane region that primes one protomer for G-protein coupling. G-protein binding expands the transmembrane dimer interface; the restriction imposed by the receptor dimer, in combination with intracellular loop 2 (ICL2), enables G-protein activation by facilitating conformational transition of G-protein alpha. Coupling to different classes of G-proteins results in distinct CASR-G-protein interfaces. In contrast to human protein, not activated by AMG 416, a D-amino acid-containing peptide agonist: this is probably due to the absence of a Cys residue at position 482, which forms a disulfide bond with the AMG 416 peptide agonist in human and that is replaced by a Tyr residue in pig. Its function is as follows. G-protein-coupled receptor that senses changes in the extracellular concentration of calcium ions and plays a key role in maintaining calcium homeostasis. Senses fluctuations in the circulating calcium concentration: activated by elevated circulating calcium, leading to decreased parathyroid hormone (PTH) secretion in parathyroid glands. In kidneys, acts as a key regulator of renal tubular calcium resorption. Ligand binding causes a conformation change that triggers signaling via guanine nucleotide-binding proteins (G-proteins) and modulates the activity of downstream effectors. CASR is coupled with different G(q)/G(11), G(i)/G(o)- or G(s)-classes of G-proteins depending on the context. In the parathyroid and kidney, CASR signals through G(q)/G(11) and G(i)/G(o) G-proteins: G(q)/G(11) coupling activates phospholipase C-beta, releasing diacylglycerol (DAG) and inositol 1,4,5-trisphosphate (IP3) second messengers, while G(i)/G(o) coupling mediates inhibition of adenylate cyclase activity. The G-protein-coupled receptor activity is activated by a co-agonist mechanism: aromatic amino acids, such as Trp or Phe, act concertedly with divalent cations, such as calcium or magnesium, to achieve full receptor activation. Acts as an activator of the NLRP3 inflammasome via G(i)/G(o)-mediated signaling: down-regulation of cyclic AMP (cAMP) relieving NLRP3 inhibition by cAMP. Acts as a regulator of proton-sensing receptor GPR68 in a seesaw manner: CASR-mediated signaling inhibits GPR68 signaling in response to extracellular calcium, while GPR68 inhibits CASR in presence of extracellular protons. The protein is Extracellular calcium-sensing receptor (CASR) of Sus scrofa (Pig).